A 172-amino-acid polypeptide reads, in one-letter code: Shikimate kinase (172 aa).

ATP is bound at residue 11–16 (GCGKST). Ser-15 contributes to the Mg(2+) binding site. Substrate is bound by residues Asp-33, Arg-57, and Gly-80. Position 120 (Arg-120) interacts with ATP. Arg-142 lines the substrate pocket. ATP is bound at residue Arg-158.

Belongs to the shikimate kinase family. As to quaternary structure, monomer. Requires Mg(2+) as cofactor.

It is found in the cytoplasm. The enzyme catalyses shikimate + ATP = 3-phosphoshikimate + ADP + H(+). It functions in the pathway metabolic intermediate biosynthesis; chorismate biosynthesis; chorismate from D-erythrose 4-phosphate and phosphoenolpyruvate: step 5/7. Catalyzes the specific phosphorylation of the 3-hydroxyl group of shikimic acid using ATP as a cosubstrate. This is Shikimate kinase from Flavobacterium johnsoniae (strain ATCC 17061 / DSM 2064 / JCM 8514 / BCRC 14874 / CCUG 350202 / NBRC 14942 / NCIMB 11054 / UW101) (Cytophaga johnsonae).